The following is a 372-amino-acid chain: Envelope phospholipase OPG057 (372 aa).

The YPPL motif lies at 153–156; that stretch reads YPPL. Residues Cys-185 and Cys-186 are each lipidated (S-palmitoyl cysteine; by host). The 28-residue stretch at 307–334 folds into the PLD phosphodiesterase domain; sequence FTIQNNTKLLIVDDEYVHITSANFDGTH.

The protein belongs to the orthopoxvirus OPG057 family. As to quaternary structure, interacts with protein OPG190. Post-translationally, palmitoylated. Attachment of the palmitate moiety is essential for correct intracellular targeting and protein function.

It is found in the virion membrane. Its subcellular location is the host Golgi apparatus. The protein resides in the host trans-Golgi network. It localises to the host endoplasmic reticulum membrane. It catalyses the reaction a 1,2-diacyl-sn-glycero-3-phosphocholine + H2O = a 1,2-diacyl-sn-glycero-3-phosphate + choline + H(+). Its function is as follows. Major envelope protein that plays a role in the biogenesis of the viral double membrane and in egress of virus from the host cell. Produces the wrapped form of virus that is required for cell-to-cell spread. Acts as a lipase with broad specificity including phospholipase C, phospholipase A, and triacylglycerol lipase activities. This Cynomys gunnisoni (Gunnison's prairie dog) protein is Envelope phospholipase OPG057 (OPG057).